The primary structure comprises 518 residues: Cell wall biosynthesis protein LcpA (518 aa).

At 1–31 (MTEKYRPVRDIKPAPAAMQSTKQAGHPVFRS) the chain is on the cytoplasmic side. Residues 32–52 (VVAFVSVLVLLVSGLGYLAVG) form a helical membrane-spanning segment. The Periplasmic segment spans residues 53-518 (KVDGVASGNL…AGGDGPRCVN (466 aa)). The disordered stretch occupies residues 485–518 (AVTSSTVGQPGADVGEPIESPEFDAGGDGPRCVN).

This sequence belongs to the LytR/CpsA/Psr (LCP) family. In terms of assembly, forms homodimers and homotetramers.

Its subcellular location is the cell inner membrane. Functionally, involved in cell wall biosynthesis. May be responsible for the transfer of arabinogalactan onto peptidoglycan. In vitro, has pyrophosphatase activity. This Corynebacterium glutamicum (strain ATCC 13032 / DSM 20300 / JCM 1318 / BCRC 11384 / CCUG 27702 / LMG 3730 / NBRC 12168 / NCIMB 10025 / NRRL B-2784 / 534) protein is Cell wall biosynthesis protein LcpA.